The following is a 44-amino-acid chain: QPRSHVDCPALHGQCQSLPCTYPLVFVGPDPFHCGPYPQFGCCA.

Intrachain disulfides connect Cys8–Cys42, Cys15–Cys34, and Cys20–Cys43.

In terms of tissue distribution, expressed in tentacles.

It is found in the nematocyst. It localises to the secreted. Its function is as follows. Peptide with unknown function. Does not exhibit antimicrobial activity against Escherichia coli and Staphylococcus aureus. Does not exhibit any effect on human ion channel TRPV1 in a Xenopus laevis oocytes assay. The protein is Peptide Hact-4 of Heliofungia actiniformis (Mushroom coral).